The following is a 56-amino-acid chain: Arcadin-3 (56 aa).

It is found in the cytoplasm. The protein resides in the cytoskeleton. Functionally, part of an actin-like archaeal cytoskeleton. The chain is Arcadin-3 from Pyrobaculum calidifontis (strain DSM 21063 / JCM 11548 / VA1).